Consider the following 144-residue polypeptide: Cystatin-F (144 aa).

The signal sequence occupies residues 1–18 (MWLAILLALCCLTSDTHG). An N-linked (GlcNAc...) asparagine glycan is attached at Asn-61. Positions 80 to 84 (QVVKG) match the Secondary area of contact motif. Cystine bridges form between Cys-98-Cys-109 and Cys-123-Cys-143.

The protein belongs to the cystatin family.

The protein localises to the secreted. Inhibits papain and cathepsin L but with affinities lower than other cystatins. May play a role in immune regulation through inhibition of a unique target in the hematopoietic system. The sequence is that of Cystatin-F (Cst7) from Mus musculus (Mouse).